Here is a 609-residue protein sequence, read N- to C-terminus: MFDAKNFLANVTHQPGVYRMFDEKGQVIYVGKAKDLKKRLSSYFRTNLNSKKTSALVSHIHSIETTITASETEALLLEHNYIKAFQPRYNVLLRDDKSYPYILLTKERHPRITSHRGSKKVQGEYFGPYPHAGAVRETLSLLQKLFPIRQCENSVYNNRSRPCLQYQIGRCSGPCIDGLVSDEEYQQQVDFARLFLQGKDQQVLEHLIKKMEQASMQLNFEQAAYFRDQIQAIRAVIEKQFVSNERLDDMDILAIAYQLGIACVQVLFIRQGKVLGNRSYFPKVPANTDLSELTETFVGQFYLQGHQGRIIPSTIIVDHVLNEKHELEVLLTEQAGRKVNIQDNVKGNKSKFLHLAQMNAQAALVTQLKQANLIQERYQALQELLSLTTIKRMECFDISHTMGEQTIASCVVFDTEGPLKSDYRRFNISGITAGDDYAAMEQALLKRYDRPLENEKIPDIIFIDGGKGQLNRALQVFAQLNVSWDKNKPLLIGVAKGVDRKAGLETLIISKQNKEVNLLPDSLALHLIQHIRDESHYHAIGGHRKKRQQAFTQSGLEAIKGVGAKRRQALLKYLGGMQGVKNATLAEISSVPGISAALAERIYETLRSE.

Residues His-13–Val-91 form the GIY-YIG domain. Positions Gln-201 to Val-236 constitute a UVR domain.

The protein belongs to the UvrC family. Interacts with UvrB in an incision complex.

Its subcellular location is the cytoplasm. In terms of biological role, the UvrABC repair system catalyzes the recognition and processing of DNA lesions. UvrC both incises the 5' and 3' sides of the lesion. The N-terminal half is responsible for the 3' incision and the C-terminal half is responsible for the 5' incision. This Histophilus somni (strain 2336) (Haemophilus somnus) protein is UvrABC system protein C.